The primary structure comprises 117 residues: Large ribosomal subunit protein eL34 (117 aa).

Belongs to the eukaryotic ribosomal protein eL34 family. Component of the large ribosomal subunit.

The protein localises to the cytoplasm. It localises to the cytosol. The protein resides in the endoplasmic reticulum. Component of the large ribosomal subunit. The ribosome is a large ribonucleoprotein complex responsible for the synthesis of proteins in the cell. This is Large ribosomal subunit protein eL34 (rpl34) from Danio rerio (Zebrafish).